A 492-amino-acid chain; its full sequence is Ketol-acid reductoisomerase (NADP(+)) (492 aa).

The KARI N-terminal Rossmann domain maps to 15–208 (AQLGQCRFMD…GGDRAGVLQS (194 aa)). NADP(+)-binding positions include 45-48 (CGAQ), Arg68, Arg76, Ser78, and 108-110 (DKQ). The active site involves His132. An NADP(+)-binding site is contributed by Gly158. 2 KARI C-terminal knotted domains span residues 209–353 (SFIA…DEQT) and 354–486 (YFDK…MTDM). Asp217, Glu221, Glu389, and Glu393 together coordinate Mg(2+). Ser414 contacts substrate.

It belongs to the ketol-acid reductoisomerase family. Mg(2+) serves as cofactor.

The catalysed reaction is (2R)-2,3-dihydroxy-3-methylbutanoate + NADP(+) = (2S)-2-acetolactate + NADPH + H(+). It carries out the reaction (2R,3R)-2,3-dihydroxy-3-methylpentanoate + NADP(+) = (S)-2-ethyl-2-hydroxy-3-oxobutanoate + NADPH + H(+). The protein operates within amino-acid biosynthesis; L-isoleucine biosynthesis; L-isoleucine from 2-oxobutanoate: step 2/4. It participates in amino-acid biosynthesis; L-valine biosynthesis; L-valine from pyruvate: step 2/4. Involved in the biosynthesis of branched-chain amino acids (BCAA). Catalyzes an alkyl-migration followed by a ketol-acid reduction of (S)-2-acetolactate (S2AL) to yield (R)-2,3-dihydroxy-isovalerate. In the isomerase reaction, S2AL is rearranged via a Mg-dependent methyl migration to produce 3-hydroxy-3-methyl-2-ketobutyrate (HMKB). In the reductase reaction, this 2-ketoacid undergoes a metal-dependent reduction by NADPH to yield (R)-2,3-dihydroxy-isovalerate. The protein is Ketol-acid reductoisomerase (NADP(+)) of Shewanella oneidensis (strain ATCC 700550 / JCM 31522 / CIP 106686 / LMG 19005 / NCIMB 14063 / MR-1).